A 121-amino-acid polypeptide reads, in one-letter code: Large ribosomal subunit protein bL12 (121 aa).

This sequence belongs to the bacterial ribosomal protein bL12 family. In terms of assembly, homodimer. Part of the ribosomal stalk of the 50S ribosomal subunit. Forms a multimeric L10(L12)X complex, where L10 forms an elongated spine to which 2 to 4 L12 dimers bind in a sequential fashion. Binds GTP-bound translation factors.

Its function is as follows. Forms part of the ribosomal stalk which helps the ribosome interact with GTP-bound translation factors. Is thus essential for accurate translation. The sequence is that of Large ribosomal subunit protein bL12 from Shigella sonnei (strain Ss046).